Here is a 512-residue protein sequence, read N- to C-terminus: ATP synthase subunit alpha (512 aa).

169-176 contributes to the ATP binding site; that stretch reads GDRQTGKT.

The protein belongs to the ATPase alpha/beta chains family. F-type ATPases have 2 components, CF(1) - the catalytic core - and CF(0) - the membrane proton channel. CF(1) has five subunits: alpha(3), beta(3), gamma(1), delta(1), epsilon(1). CF(0) has three main subunits: a(1), b(2) and c(9-12). The alpha and beta chains form an alternating ring which encloses part of the gamma chain. CF(1) is attached to CF(0) by a central stalk formed by the gamma and epsilon chains, while a peripheral stalk is formed by the delta and b chains.

The protein localises to the cell inner membrane. It catalyses the reaction ATP + H2O + 4 H(+)(in) = ADP + phosphate + 5 H(+)(out). Its function is as follows. Produces ATP from ADP in the presence of a proton gradient across the membrane. The alpha chain is a regulatory subunit. This chain is ATP synthase subunit alpha, found in Ruegeria pomeroyi (strain ATCC 700808 / DSM 15171 / DSS-3) (Silicibacter pomeroyi).